A 655-amino-acid polypeptide reads, in one-letter code: Bifunctional lysine-specific demethylase and histidyl-hydroxylase NO66 (655 aa).

Polar residues predominate over residues 1-16 (MEKVTNSAAAKPQGNN). Disordered regions lie at residues 1–48 (MEKV…LSDM) and 67–122 (EDTD…QGAS). A compositionally biased stretch (low complexity) spans 76-86 (STSSKEAAAAK). Over residues 87-96 (TADHERRLQA) the composition is skewed to basic and acidic residues. Residue Ser-131 is modified to Phosphoserine. Thr-137 bears the Phosphothreonine mark. The residue at position 138 (Ser-138) is a Phosphoserine. The disordered stretch occupies residues 185-210 (KAPEEGNNNNDEKEMSTETSEPHKTD). Residues 194–210 (NDEKEMSTETSEPHKTD) are compositionally biased toward basic and acidic residues. The JmjC domain occupies 307-452 (CSIRLLHASA…NLLETLMPMV (146 aa)). Fe cation-binding residues include His-353, Asp-355, and His-418.

It belongs to the ROX family. NO66 subfamily. Requires Fe(2+) as cofactor.

The protein localises to the nucleus. It catalyses the reaction N(6),N(6)-dimethyl-L-lysyl(36)-[histone H3] + 2 2-oxoglutarate + 2 O2 = L-lysyl(36)-[histone H3] + 2 formaldehyde + 2 succinate + 2 CO2. In terms of biological role, oxygenase that can act as both a histone lysine demethylase and a ribosomal histidine hydroxylase. Specifically demethylates 'Lys-4' (H3K4me) and 'Lys-36' (H3K36me) of histone H3, thereby playing a central role in histone code. The protein is Bifunctional lysine-specific demethylase and histidyl-hydroxylase NO66 of Drosophila sechellia (Fruit fly).